The primary structure comprises 986 residues: Bifunctional glutamine synthetase adenylyltransferase/adenylyl-removing enzyme (986 aa).

The adenylyl removase stretch occupies residues 1–475 (MSFPLAHVDA…VFDHLIGEEK (475 aa)). An adenylyl transferase region spans residues 481–986 (TETLWHDFLE…LFEHNDKYEE (506 aa)).

This sequence belongs to the GlnE family. Requires Mg(2+) as cofactor.

It carries out the reaction [glutamine synthetase]-O(4)-(5'-adenylyl)-L-tyrosine + phosphate = [glutamine synthetase]-L-tyrosine + ADP. The catalysed reaction is [glutamine synthetase]-L-tyrosine + ATP = [glutamine synthetase]-O(4)-(5'-adenylyl)-L-tyrosine + diphosphate. Its function is as follows. Involved in the regulation of glutamine synthetase GlnA, a key enzyme in the process to assimilate ammonia. When cellular nitrogen levels are high, the C-terminal adenylyl transferase (AT) inactivates GlnA by covalent transfer of an adenylyl group from ATP to specific tyrosine residue of GlnA, thus reducing its activity. Conversely, when nitrogen levels are low, the N-terminal adenylyl removase (AR) activates GlnA by removing the adenylyl group by phosphorolysis, increasing its activity. The regulatory region of GlnE binds the signal transduction protein PII (GlnB) which indicates the nitrogen status of the cell. In Pasteurella multocida (strain Pm70), this protein is Bifunctional glutamine synthetase adenylyltransferase/adenylyl-removing enzyme.